Consider the following 234-residue polypeptide: GTP:AMP phosphotransferase, mitochondrial (234 aa).

24-29 is a GTP binding site; it reads GSGKGT. Positions 45–74 are NMP; it reads SSGDILRQEIKSESTLGREATTYIAQGKLL. AMP-binding positions include S46, R51, 72 to 74, 103 to 106, and Q110; these read KLL and GFPR. The interval 144-181 is LID; it reads NRYVHVPSGRVYNLQYNPPKVPGLDDITGEPLTKRLDD. GTP-binding positions include R145 and 154-155; that span reads VY. The AMP site is built by R178 and R189. GTP is bound at residue S218.

It belongs to the adenylate kinase family. AK3 subfamily. As to quaternary structure, monomer.

The protein resides in the mitochondrion matrix. The catalysed reaction is a ribonucleoside 5'-triphosphate + AMP = a ribonucleoside 5'-diphosphate + ADP. In terms of biological role, involved in maintaining the homeostasis of cellular nucleotides by catalyzing the interconversion of nucleoside phosphates. Has GTP:AMP phosphotransferase and ITP:AMP phosphotransferase activities. Does not accept ATP as phosphate donor. The sequence is that of GTP:AMP phosphotransferase, mitochondrial from Saccharomyces cerevisiae (Baker's yeast).